We begin with the raw amino-acid sequence, 171 residues long: Odorant-binding protein 1b (171 aa).

Positions 1-19 are cleaved as a signal peptide; the sequence is MMVKFLLLALVFGLAHVHA. Intrachain disulfides connect cysteine 57/cysteine 61 and cysteine 76/cysteine 169.

This sequence belongs to the calycin superfamily. Lipocalin family. May form a heterodimer with OBP1A. In terms of processing, the N-terminus may be blocked. As to expression, expressed in nasal mucosa (at protein level). Specifically detected in septal and lateral nasal glands.

Its subcellular location is the secreted. In terms of biological role, binds the chemical odorant 2-isobutyl-3-methoxypyrazine. The sequence is that of Odorant-binding protein 1b from Mus musculus (Mouse).